The sequence spans 387 residues: Limonene 1,2-monooxygenase (387 aa).

It belongs to the bacterial luciferase oxidoreductase family. FAD is required as a cofactor.

It carries out the reaction (4S)-limonene + NADPH + O2 + H(+) = limonene 1,2-epoxide + NADP(+) + H2O. It catalyses the reaction (4S)-limonene + NADH + O2 + H(+) = limonene 1,2-epoxide + NAD(+) + H2O. The catalysed reaction is (4R)-limonene + NADH + O2 + H(+) = limonene 1,2-epoxide + NAD(+) + H2O. The enzyme catalyses (4R)-limonene + NADPH + O2 + H(+) = limonene 1,2-epoxide + NADP(+) + H2O. It participates in terpene metabolism; (4R)-limonene degradation; (1S,4R)-1-hydroxylimonen-2-one from (4R)-limonene: step 1/3. In terms of biological role, acts on both enantiomers of limonene by their NAD-dependent epoxidation at the 1,2 double bond forming limonene-1,2-epoxide. The sequence is that of Limonene 1,2-monooxygenase (limB) from Rhodococcus erythropolis (Arthrobacter picolinophilus).